The sequence spans 762 residues: 5-methyltetrahydropteroyltriglutamate--homocysteine methyltransferase (762 aa).

Residues 18 to 21 (REWK) and K112 contribute to the 5-methyltetrahydropteroyltri-L-glutamate site. Residues 435–437 (IGS) and E488 contribute to the L-homocysteine site. L-methionine contacts are provided by residues 435 to 437 (IGS) and E488. 5-methyltetrahydropteroyltri-L-glutamate-binding positions include 519–520 (RC) and W565. Position 603 (D603) interacts with L-homocysteine. Position 603 (D603) interacts with L-methionine. Position 609 (E609) interacts with 5-methyltetrahydropteroyltri-L-glutamate. Zn(2+) contacts are provided by H645, C647, and E669. The active-site Proton donor is H698. Position 730 (C730) interacts with Zn(2+).

The protein belongs to the vitamin-B12 independent methionine synthase family. Zn(2+) is required as a cofactor.

The catalysed reaction is 5-methyltetrahydropteroyltri-L-glutamate + L-homocysteine = tetrahydropteroyltri-L-glutamate + L-methionine. The protein operates within amino-acid biosynthesis; L-methionine biosynthesis via de novo pathway; L-methionine from L-homocysteine (MetE route): step 1/1. In terms of biological role, catalyzes the transfer of a methyl group from 5-methyltetrahydrofolate to homocysteine resulting in methionine formation. The chain is 5-methyltetrahydropteroyltriglutamate--homocysteine methyltransferase from Bacillus velezensis (strain DSM 23117 / BGSC 10A6 / LMG 26770 / FZB42) (Bacillus amyloliquefaciens subsp. plantarum).